Reading from the N-terminus, the 1310-residue chain is Contactin-associated protein-like 4 (1310 aa).

Residues 1 to 27 form the signal peptide; that stretch reads MNMGSVAGAVLKMLLLLSTQNWNRVEA. The Extracellular portion of the chain corresponds to 28–1243; the sequence is GNSYDCDEPL…LTHAIKSDSA (1216 aa). The 147-residue stretch at 33–179 folds into the F5/8 type C domain; the sequence is CDEPLVSALP…IGMRIEVFGC (147 aa). Cysteines 33 and 179 form a disulfide. The Laminin G-like 1 domain maps to 214–346; that stretch reads FKTMESDGIL…NLFYNGVDVI (133 aa). N-linked (GlcNAc...) asparagine glycans are attached at residues Asn262, Asn287, and Asn361. Disulfide bonds link Cys334–Cys366, Cys517–Cys549, Cys555–Cys566, and Cys560–Cys575. The Laminin G-like 2 domain occupies 400-529; the sequence is FRTWNKAGLL…LISINNKMVD (130 aa). Asn540 is a glycosylation site (N-linked (GlcNAc...) asparagine). The EGF-like 1 domain maps to 551–588; sequence ISDRCLPNSCEHGGECSQSWSTFHCNCTNTGYTGATCH. N-linked (GlcNAc...) asparagine glycosylation occurs at Asn576. The cysteines at positions 577 and 587 are disulfide-linked. One can recognise a Fibrinogen C-terminal domain in the interval 589–794; that stretch reads SSVYEQSCEA…LLCRGDRPFW (206 aa). Residues Asn604, Asn627, Asn639, Asn708, and Asn750 are each glycosylated (N-linked (GlcNAc...) asparagine). The Laminin G-like 3 domain maps to 795 to 960; it reads NAASFNTEAS…TVTPGVQPGC (166 aa). Intrachain disulfides connect Cys933-Cys960, Cys964-Cys977, Cys971-Cys986, and Cys988-Cys998. The 40-residue stretch at 960 to 999 folds into the EGF-like 2 domain; that stretch reads CRGHCGSYGKLCRHGGKCREKPSGFFCDCSSSAYAGPFCS. Residues Asn1019, Asn1025, and Asn1075 are each glycosylated (N-linked (GlcNAc...) asparagine). One can recognise a Laminin G-like 4 domain in the interval 1048 to 1204; that stretch reads FRTTRAPSLL…VTGHVTESSC (157 aa). A disulfide bridge connects residues Cys1169 and Cys1204. A helical transmembrane segment spans residues 1244–1264; it reads VIGGLIAVVIFILLCVSAIAV. At 1265–1310 the chain is on the cytoplasmic side; that stretch reads RIYQQKRLYKRNEAKRSENVDSAEAVLKSELHIQNAVGENQKEYFF.

This sequence belongs to the neurexin family. As to quaternary structure, interacts with TIAM1. As to expression, specifically present in developing cortical interneurons: highly expressed in cortical parvalbumin (PV) cells and midbrain dopaminergic neurons and is localized presynaptically (at protein level). Also present in the substantia nigra pars compacta (SnC) and ventral tegmental area (VTA) midbrain dopaminergic projection populations.

It is found in the presynaptic cell membrane. Its function is as follows. Presynaptic protein involved in both dopaminergic synaptic transmission and GABAergic system, thereby participating in the structural maturation of inhibitory interneuron synapses. Involved in the dopaminergic synaptic transmission by attenuating dopamine release through a presynaptic mechanism. Also participates in the GABAergic system. In Mus musculus (Mouse), this protein is Contactin-associated protein-like 4 (Cntnap4).